A 162-amino-acid chain; its full sequence is MAPITVGDVVPDGTISFFDENDQLQTVSVHSIAAGKKVILFGVPGAFTPTCSMSHVPGFIGKAEELKSKGIDEIICFSVNDPFVMKAWGKTYQENKHVKFVADGSGEYTHLLGLELDLKDKGLGIRSRRFALLLDNLKVTVANVENGGEFTVSSAEDILKAL.

A Thioredoxin domain is found at 4–162; the sequence is ITVGDVVPDG…SSAEDILKAL (159 aa). Cysteine 51 acts as the Cysteine sulfenic acid (-SOH) intermediate in catalysis.

Belongs to the peroxiredoxin family. Prx5 subfamily. Monomer. In terms of tissue distribution, exclusively expressed in buds and flowers. Also detected in pollen.

The protein localises to the cytoplasm. The enzyme catalyses [glutaredoxin]-dithiol + a hydroperoxide = [glutaredoxin]-disulfide + an alcohol + H2O. Functionally, thiol-specific peroxidase that catalyzes the reduction of hydrogen peroxide and organic hydroperoxides to water and alcohols, respectively. Plays a role in cell protection against oxidative stress by detoxifying peroxides. May be involved in intracellular redox signaling. In Arabidopsis thaliana (Mouse-ear cress), this protein is Peroxiredoxin-2D (PRXIID).